The chain runs to 150 residues: Cytochrome c-type biogenesis protein CcmE (150 aa).

The Cytoplasmic segment spans residues 1–7; it reads MTRKQKR. Residues 8 to 28 traverse the membrane as a helical; Signal-anchor for type II membrane protein segment; it reads LAIIGGGVGFLTAAVLLVMFA. Residues 29-150 are Periplasmic-facing; that stretch reads FSQAVAYFYV…VTLGGEENIR (122 aa). Heme is bound by residues His-123 and Tyr-127.

This sequence belongs to the CcmE/CycJ family.

It localises to the cell inner membrane. In terms of biological role, heme chaperone required for the biogenesis of c-type cytochromes. Transiently binds heme delivered by CcmC and transfers the heme to apo-cytochromes in a process facilitated by CcmF and CcmH. The protein is Cytochrome c-type biogenesis protein CcmE of Sinorhizobium medicae (strain WSM419) (Ensifer medicae).